We begin with the raw amino-acid sequence, 436 residues long: 3-ketoacyl-CoA thiolase (436 aa).

Cys-99 (acyl-thioester intermediate) is an active-site residue. Residues His-392 and Cys-422 each act as proton acceptor in the active site.

Belongs to the thiolase-like superfamily. Thiolase family. As to quaternary structure, heterotetramer of two alpha chains (FadJ) and two beta chains (FadI).

It localises to the cytoplasm. It catalyses the reaction an acyl-CoA + acetyl-CoA = a 3-oxoacyl-CoA + CoA. It participates in lipid metabolism; fatty acid beta-oxidation. Functionally, catalyzes the final step of fatty acid oxidation in which acetyl-CoA is released and the CoA ester of a fatty acid two carbons shorter is formed. The sequence is that of 3-ketoacyl-CoA thiolase from Shewanella piezotolerans (strain WP3 / JCM 13877).